A 77-amino-acid polypeptide reads, in one-letter code: Small nuclear ribonucleoprotein G (77 aa).

The Sm domain occupies Ala-4 to Met-76.

It belongs to the snRNP Sm proteins family. As to quaternary structure, belongs to the 40S cdc5-associated complex (or cwf complex), a spliceosome sub-complex reminiscent of a late-stage spliceosome composed of the U2, U5 and U6 snRNAs and at least brr2, cdc5, cwf2/prp3, cwf3/syf1, cwf4/syf3, cwf5/ecm2, spp42/cwf6, cwf7/spf27, cwf8, cwf9, cwf10, cwf11, cwf12, prp45/cwf13, cwf14, cwf15, cwf16, cwf17, cwf18, cwf19, cwf20, cwf21, cwf22, cwf23, cwf24, cwf25, cwf26, cyp7/cwf27, cwf28, cwf29/ist3, lea1, msl1, prp5/cwf1, prp10, prp12/sap130, prp17, prp22, sap61, sap62, sap114, sap145, slu7, smb1, smd1, smd3, smf1, smg1 and syf2.

The protein localises to the nucleus. The protein resides in the cytoplasm. In terms of biological role, plays a role in pre-mRNA splicing as a core component of the spliceosomal U1, U2, U4 and U5 small nuclear ribonucleoproteins (snRNPs), the building blocks of the spliceosome. The protein is Small nuclear ribonucleoprotein G (smg1) of Schizosaccharomyces pombe (strain 972 / ATCC 24843) (Fission yeast).